Here is a 246-residue protein sequence, read N- to C-terminus: Small ribosomal subunit protein uS2 (246 aa).

Belongs to the universal ribosomal protein uS2 family.

In Helicobacter acinonychis (strain Sheeba), this protein is Small ribosomal subunit protein uS2.